The chain runs to 391 residues: Elongation factor Tu (391 aa).

Residues 10 to 201 (KPHVNIGTIG…AVDEYIPTPA (192 aa)) enclose the tr-type G domain. The segment at 19–26 (GHVDHGKT) is G1. 19 to 26 (GHVDHGKT) contributes to the GTP binding site. Thr26 provides a ligand contact to Mg(2+). Positions 55-59 (GITIS) are G2. The tract at residues 76-79 (DCPG) is G3. Residues 76–80 (DCPGH) and 131–134 (NKVD) contribute to the GTP site. Residues 131–134 (NKVD) form a G4 region. The tract at residues 169–171 (SAL) is G5.

Belongs to the TRAFAC class translation factor GTPase superfamily. Classic translation factor GTPase family. EF-Tu/EF-1A subfamily. Monomer.

The protein localises to the cytoplasm. It catalyses the reaction GTP + H2O = GDP + phosphate + H(+). GTP hydrolase that promotes the GTP-dependent binding of aminoacyl-tRNA to the A-site of ribosomes during protein biosynthesis. The chain is Elongation factor Tu from Cereibacter sphaeroides (strain ATCC 17025 / ATH 2.4.3) (Rhodobacter sphaeroides).